Reading from the N-terminus, the 383-residue chain is ATP phosphoribosyltransferase regulatory subunit (383 aa).

This sequence belongs to the class-II aminoacyl-tRNA synthetase family. HisZ subfamily. Heteromultimer composed of HisG and HisZ subunits.

It is found in the cytoplasm. It participates in amino-acid biosynthesis; L-histidine biosynthesis; L-histidine from 5-phospho-alpha-D-ribose 1-diphosphate: step 1/9. In terms of biological role, required for the first step of histidine biosynthesis. May allow the feedback regulation of ATP phosphoribosyltransferase activity by histidine. In Cupriavidus taiwanensis (strain DSM 17343 / BCRC 17206 / CCUG 44338 / CIP 107171 / LMG 19424 / R1) (Ralstonia taiwanensis (strain LMG 19424)), this protein is ATP phosphoribosyltransferase regulatory subunit.